The sequence spans 112 residues: MLIVTTEKVEGKKISKVLGLVRGSTIRAKHVGKDIGASFKNLVGGELTGYNEMLTEARQIAIGRMVEDAEAKGANAVIAFRLSSASVMQGAAEMLAYGTAVVLEDDNSILEK.

It belongs to the UPF0145 family.

This is UPF0145 protein CD630_17110 from Clostridioides difficile (strain 630) (Peptoclostridium difficile).